The following is a 352-amino-acid chain: uncharacterized protein (352 aa).

This is an uncharacterized protein from Acanthamoeba polyphaga mimivirus (APMV).